Reading from the N-terminus, the 252-residue chain is Neurotrophic factor BDNF precursor form (252 aa).

Positions 1 to 18 (MTILFLTMVISYFGCMKA) are cleaved as a signal peptide. Residues 19-133 (APMKEANVRG…AANMSMRVRR (115 aa)) constitute a propeptide that is removed on maturation. Positions 43 to 62 (LESVNGPKAGSRGLTSSSSS) are disordered. N126 carries an N-linked (GlcNAc...) asparagine glycan. Disulfide bonds link C146–C213, C191–C242, and C201–C244.

It belongs to the NGF-beta family. As to quaternary structure, monomers and homodimers. Binds to NTRK2/TRKB. Can form heterodimers with other neurotrophin family members, such as NTF3 and NTF4 (in vitro), but the physiological relevance of this is not clear. BDNF precursor form: interacts with the heterodimer formed by NGFR and SORCS2. Mature BDNF has much lower affinity for the heterodimer formed by NGFR and SORCS2. In terms of processing, N-glycosylated and glycosulfated, contrary to mature BDNF. Post-translationally, mature BDNF is produced by proteolytic removal of the propeptide, catalyzed by a FURIN family member. In addition, the precursor form is proteolytically cleaved within the propeptide, but this is not an obligatory intermediate for the production of mature BDNF. Can be converted into mature BDNF by plasmin (PLG). As to expression, brain and central nervous system.

Its subcellular location is the secreted. In terms of biological role, important signaling molecule that activates signaling cascades downstream of NTRK2. During development, promotes the survival and differentiation of selected neuronal populations of the peripheral and central nervous systems. Participates in axonal growth, pathfinding and in the modulation of dendritic growth and morphology. Major regulator of synaptic transmission and plasticity at adult synapses in many regions of the CNS. The versatility of BDNF is emphasized by its contribution to a range of adaptive neuronal responses including long-term potentiation (LTP), long-term depression (LTD), certain forms of short-term synaptic plasticity, as well as homeostatic regulation of intrinsic neuronal excitability. Its function is as follows. Important signaling molecule that activates signaling cascades downstream of NTRK2. Activates signaling cascades via the heterodimeric receptor formed by NGFR and SORCS2. Signaling via NGFR and SORCS2 plays a role in synaptic plasticity and long-term depression (LTD). Binding to NGFR and SORCS2 promotes neuronal apoptosis. Promotes neuronal growth cone collapse. In Sus scrofa (Pig), this protein is Neurotrophic factor BDNF precursor form (BDNF).